The chain runs to 417 residues: Spermidine/putrescine import ATP-binding protein PotA (417 aa).

One can recognise an ABC transporter domain in the interval 5 to 308; that stretch reads IILKDLTKVF…PANRFVAQFV (304 aa). Residue 37-44 coordinates ATP; sequence GPSGCGKT. The interval 105 to 177 is insert; sequence DFNSKIKANL…TALKCKKINK (73 aa).

Belongs to the ABC transporter superfamily. Spermidine/putrescine importer (TC 3.A.1.11.1) family. The complex is composed of two ATP-binding proteins (PotA), two transmembrane proteins (PotB and PotC) and a solute-binding protein (PotD).

The protein localises to the cell membrane. The enzyme catalyses ATP + H2O + polyamine-[polyamine-binding protein]Side 1 = ADP + phosphate + polyamineSide 2 + [polyamine-binding protein]Side 1.. Functionally, part of the ABC transporter complex PotABCD involved in spermidine/putrescine import. Responsible for energy coupling to the transport system. The protein is Spermidine/putrescine import ATP-binding protein PotA of Onion yellows phytoplasma (strain OY-M).